A 176-amino-acid chain; its full sequence is Isopentenyl-diphosphate Delta-isomerase (176 aa).

Residues His-23 and His-29 each coordinate Mn(2+). Residues 27–161 (LRHLAISVFV…PERFTPWLKI (135 aa)) enclose the Nudix hydrolase domain. The active site involves Cys-63. Cys-63 serves as a coordination point for Mg(2+). His-65 lines the Mn(2+) pocket. Glu-83 lines the Mg(2+) pocket. The Mn(2+) site is built by Glu-109 and Glu-111. Residue Glu-111 is part of the active site.

The protein belongs to the IPP isomerase type 1 family. Mg(2+) is required as a cofactor. Requires Mn(2+) as cofactor.

The protein localises to the cytoplasm. The catalysed reaction is isopentenyl diphosphate = dimethylallyl diphosphate. The protein operates within isoprenoid biosynthesis; dimethylallyl diphosphate biosynthesis; dimethylallyl diphosphate from isopentenyl diphosphate: step 1/1. It functions in the pathway porphyrin-containing compound metabolism; chlorophyll biosynthesis. Catalyzes the 1,3-allylic rearrangement of the homoallylic substrate isopentenyl (IPP) to its highly electrophilic allylic isomer, dimethylallyl diphosphate (DMAPP). This is Isopentenyl-diphosphate Delta-isomerase from Rhodobacter capsulatus (strain ATCC BAA-309 / NBRC 16581 / SB1003).